We begin with the raw amino-acid sequence, 155 residues long: Small ribosomal subunit protein uS7c (155 aa).

It belongs to the universal ribosomal protein uS7 family. Part of the 30S ribosomal subunit.

It is found in the plastid. Its subcellular location is the chloroplast. One of the primary rRNA binding proteins, it binds directly to 16S rRNA where it nucleates assembly of the head domain of the 30S subunit. This is Small ribosomal subunit protein uS7c (rps7) from Coelogyne cristata (Orchid).